We begin with the raw amino-acid sequence, 628 residues long: NUAK family SNF1-like kinase 2 (628 aa).

Met1 is modified (N-acetylmethionine). Positions 53 to 303 (YEFLETLGKG…LEDVASHWWV (251 aa)) constitute a Protein kinase domain. Residues 59–67 (LGKGTYGKV) and Lys81 each bind ATP. Residue Asp175 is the Proton acceptor of the active site. Thr208 carries the post-translational modification Phosphothreonine; by LKB1. Residues 355–493 (KQHAPGGGST…KEQKPPQASG (139 aa)) are disordered. Phosphoserine is present on Ser435. The segment covering 457–469 (SGYYSSPEPSESG) has biased composition (low complexity). Residues Ser523, Ser544, Ser547, and Ser573 each carry the phosphoserine modification. The interval 531-562 (RPLARASRPSGAVSEDSILSSESFDQLDLPER) is disordered.

The protein belongs to the protein kinase superfamily. CAMK Ser/Thr protein kinase family. SNF1 subfamily. Requires Mg(2+) as cofactor. Post-translationally, phosphorylated at Thr-208 by STK11/LKB1 in complex with STE20-related adapter-alpha (STRADA) pseudo kinase and CAB39. Autophosphorylation is also possible at Thr-208.

The catalysed reaction is L-seryl-[protein] + ATP = O-phospho-L-seryl-[protein] + ADP + H(+). It carries out the reaction L-threonyl-[protein] + ATP = O-phospho-L-threonyl-[protein] + ADP + H(+). Activated by phosphorylation on Thr-208. In terms of biological role, stress-activated kinase involved in tolerance to glucose starvation. Induces cell-cell detachment by increasing F-actin conversion to G-actin. Expression is induced by CD95 or TNF-alpha, via NF-kappa-B. Protects cells from CD95-mediated apoptosis and is required for the increased motility and invasiveness of CD95-activated tumor cells. Phosphorylates LATS1 and LATS2. Plays a key role in neural tube closure during embryonic development through LATS2 phosphorylation and regulation of the nuclear localization of YAP1 a critical downstream regulatory target in the Hippo signaling pathway. This Homo sapiens (Human) protein is NUAK family SNF1-like kinase 2.